A 267-amino-acid polypeptide reads, in one-letter code: Integral membrane protein 2C (267 aa).

The residue at position 37 (Thr-37) is a Phosphothreonine. Residues 55–75 form a helical; Signal-anchor for type II membrane protein membrane-spanning segment; that stretch reads VGGVCYLSMGMVVLLMGLVFA. In terms of domain architecture, BRICHOS spans 136-230; that stretch reads FGGGDPADII…LCNGKDTYRL (95 aa). A disulfide bridge links Cys-163 with Cys-222. The N-linked (GlcNAc...) asparagine glycan is linked to Asn-169.

Belongs to the ITM2 family. As to quaternary structure, interacts with BACE1. Interacts with APP. Interacts with STMN2. Post-translationally, type I membrane-bound, as well as soluble, furin has a pre-eminent role in ITM2C proteolytic processing. PCSK7 and PCSK5 may also be involved although to a lesser extent. The soluble form of PCSK7 is incapable of processing ITM2C. Fails to undergo shedding by ADAM10 and intramembrane cleavage by SPPL2B.

It localises to the lysosome membrane. The protein localises to the cell membrane. Functionally, negative regulator of amyloid-beta peptide production. May inhibit the processing of APP by blocking its access to alpha- and beta-secretase. Binding to the beta-secretase-cleaved APP C-terminal fragment is negligible, suggesting that ITM2C is a poor gamma-secretase cleavage inhibitor. May play a role in TNF-induced cell death and neuronal differentiation. The chain is Integral membrane protein 2C (ITM2C) from Macaca fascicularis (Crab-eating macaque).